The sequence spans 243 residues: Derlin-1.1 (243 aa).

Topologically, residues 1–20 (MSSPAEYYKSLPPISKAYGT) are cytoplasmic. Residues 21–41 (LCFFTTVLVQLQILHPLFLYL) traverse the membrane as a helical segment. Residues 42-55 (DYPLVFKKFEIWRL) are Lumenal-facing. A helical transmembrane segment spans residues 56 to 76 (LTSFFFLAPFSMKFGIRLLMI). Residues 77 to 94 (ARYGVMLEKGAFDKRTAD) lie on the Cytoplasmic side of the membrane. The helical transmembrane segment at 95–115 (FLWMMIFGAISLLVLSIIPLF) threads the bilayer. At 116-157 (NSFFLGIPMVSMLLYVWSRENPNAQINIYGLVQLRSFYLPWA) the chain is on the lumenal side. The helical transmembrane segment at 158-178 (MLLLDVIFGSSLMPGLLGIMV) threads the bilayer. At 179–243 (GHLYYFFAVL…FRGRSYRLNQ (65 aa)) the chain is on the cytoplasmic side. Positions 219–243 (SPVRPPANGNSGSGVFRGRSYRLNQ) are disordered.

It belongs to the derlin family. As to expression, expressed in roots, stalks, leaves, immature ears, embryo and endosperm.

Its subcellular location is the endoplasmic reticulum membrane. May be involved in the degradation process of specific misfolded endoplasmic reticulum (ER) luminal proteins. The sequence is that of Derlin-1.1 (DER1.1) from Zea mays (Maize).